The following is a 310-amino-acid chain: tRNA pseudouridine synthase B (310 aa).

The Nucleophile role is filled by aspartate 47.

Belongs to the pseudouridine synthase TruB family. Type 1 subfamily.

It catalyses the reaction uridine(55) in tRNA = pseudouridine(55) in tRNA. Functionally, responsible for synthesis of pseudouridine from uracil-55 in the psi GC loop of transfer RNAs. This is tRNA pseudouridine synthase B from Psychromonas ingrahamii (strain DSM 17664 / CCUG 51855 / 37).